The sequence spans 136 residues: MRFALAITTLIAAVTAAPSGHHGGKDLHKMTLGQAGDRCGADQSIYCCNEKTTKIEHSSPETGLGGLLGATVGADGLLSHLLGTCTKIPVNVLAVGNLLQSECTNRAACCHNTPSVAYGGLVNLALPCVAIGSLIQ.

Residues 1 to 16 (MRFALAITTLIAAVTA) form the signal peptide. 4 disulfides stabilise this stretch: C39-C109, C47-C103, C48-C85, and C110-C128.

This sequence belongs to the fungal hydrophobin family. As to expression, expressed in aerial conidia, in vitro blastospores, submerged conidia, and cells sporulating on chitin and insect cuticle, with hyd1 expression peaking in growing mycelia.

Its subcellular location is the secreted. The protein localises to the cell wall. It is found in the spore coat. It localises to the vacuole. The protein resides in the cytoplasmic vesicle. Functionally, aerial growth, conidiation, and dispersal of filamentous fungi in the environment rely upon a capability of their secreting small amphipathic proteins called hydrophobins (HPBs) with low sequence identity. Class I can self-assemble into an outermost layer of rodlet bundles on aerial cell surfaces, conferring cellular hydrophobicity that supports fungal growth, development and dispersal; whereas Class II form highly ordered films at water-air interfaces through intermolecular interactions but contribute nothing to the rodlet structure. Hyd1A contributes to certain cell wall-related features, such as hydrophobicity but is not involved in cell wall-related events during fungal proliferation in host hemocoel. Hyd1A and hyd1B coregulate the formation, morphology and orderly assembly of rodlet bundles required for conidial hydrophobicity and infectivity. Contributes to the spore coat rodlet layer. The sequence is that of Class I hydrophobin A from Beauveria bassiana (strain ARSEF 2860) (White muscardine disease fungus).